We begin with the raw amino-acid sequence, 224 residues long: Cytosolic-abundant heat soluble protein 77580 (224 aa).

The segment covering 1-13 (MSNYQQESSYQYS) has biased composition (low complexity). The disordered stretch occupies residues 1-38 (MSNYQQESSYQYSDRSNNGQQQEQQEKKEVEHSSYTHT). A compositionally biased stretch (basic and acidic residues) spans 24–38 (QQEKKEVEHSSYTHT). Positions 83-191 (VIDTEAETEE…KRVLERSKFH (109 aa)) form a coiled coil. CAHS motif stretches follow at residues 122–140 (YRKQ…LEKQ) and 159–177 (QKRQ…LERE). Residues 200-215 (AAAGSTHSGSSSVAVS) show a composition bias toward low complexity. The segment at 200–224 (AAAGSTHSGSSSVAVSESEKFQTNN) is disordered.

This sequence belongs to the Cytosolic-abundant heat soluble protein (CAHS) family.

The protein localises to the cytoplasm. CAHS proteins are cytosolic heat soluble proteins that seem to contribute to the anhydrobiosis in tardigrades, but their specific mechanisms are yet to be identified. It is possible that protection during anhydrobiosis might occur via the stabilization of vitrifying small molecules such as sugars, but not via the direct glass transition of CAHS proteins themselves. This is Cytosolic-abundant heat soluble protein 77580 from Hypsibius exemplaris (Freshwater tardigrade).